The following is a 367-amino-acid chain: Putative ionic transporter y4hA (367 aa).

11 helical membrane passes run 12 to 32, 39 to 59, 74 to 94, 108 to 128, 143 to 163, 172 to 192, 221 to 241, 249 to 269, 291 to 311, 318 to 338, and 347 to 367; these read VPLWSWIIPLFGCVIAAMTLA, SVVLLLMSAGLLTGAVFASVH, AILLAVCVTIIEVAIIGSLML, VFAAVMIVLNGVIGLCLVLGG, AALAVLGTLATLSLVLPNFVT, AIQLVVIGLVSVVLYGVFLFV, LAAGALLVLALIAVILLAMLL, VEALGLPQAVVGVTIAGVVLL, VLGSALASIGVTIPVVAAISV, ALGLAPQNLIMLILTLFVGTI, and VLQGAVHLAIFTVFLLLSAIP.

This sequence belongs to the Ca(2+):cation antiporter (CaCA) (TC 2.A.19) family.

It is found in the cell membrane. Its function is as follows. Possible cation transporter. The sequence is that of Putative ionic transporter y4hA from Sinorhizobium fredii (strain NBRC 101917 / NGR234).